Consider the following 181-residue polypeptide: dCTP deaminase (181 aa).

Residues 100–105 (RSTFAR) and Asp116 contribute to the dCTP site. The Proton donor/acceptor role is filled by Glu126. Positions 158 and 165 each coordinate dCTP. Residues 160 to 181 (GKYQGQRGVTPPKLDNSSSKNF) form a disordered region.

Belongs to the dCTP deaminase family. Homotrimer.

It catalyses the reaction dCTP + H2O + H(+) = dUTP + NH4(+). The protein operates within pyrimidine metabolism; dUMP biosynthesis; dUMP from dCTP (dUTP route): step 1/2. Functionally, catalyzes the deamination of dCTP to dUTP. This chain is dCTP deaminase, found in Desulfurococcus amylolyticus (strain DSM 18924 / JCM 16383 / VKM B-2413 / 1221n) (Desulfurococcus kamchatkensis).